Consider the following 327-residue polypeptide: MEAIKGSEVNVPDAVFAWLLDGRGGIKPLENDDIIDSQHPCWLHLNYTHPDSAQWLASTPLLPNSVRDALAGESSRPRVSRMGEGTLITLRCINGSTDERPDQLVAMRVYMDERFIVSTRQRKVLALDEVVSDLQEGTGPSDCGGWLVDVCDALTDHASEFIEQLHDKIIDLEDNLLDQQIPPRGFLALLRKQLIVMRRYMAPQRDVYARLASERLAWMNDDQRRRMQDIADRLGRGLDEIDACIARTGVMADEIAQVMQESLARRTYTMSLMAMVFLPSTFLTGLFGVNLGGIPGGAWHFGFSMFCILLVVLIGGVTLWLHRSKWL.

The Cytoplasmic segment spans residues 1-273; it reads MEAIKGSEVN…ARRTYTMSLM (273 aa). The helical transmembrane segment at 274–294 threads the bilayer; that stretch reads AMVFLPSTFLTGLFGVNLGGI. Topologically, residues 295–300 are periplasmic; sequence PGGAWH. A helical membrane pass occupies residues 301 to 321; that stretch reads FGFSMFCILLVVLIGGVTLWL. Topologically, residues 322–327 are cytoplasmic; that stretch reads HRSKWL.

Belongs to the CorA metal ion transporter (MIT) (TC 1.A.35) family.

Its subcellular location is the cell inner membrane. It catalyses the reaction Zn(2+)(out) + H(+)(out) = Zn(2+)(in) + H(+)(in). Functionally, zinc transporter. Acts as a Zn(2+):proton symporter, which likely mediates zinc ion uptake. The polypeptide is Zinc transport protein ZntB (Citrobacter koseri (strain ATCC BAA-895 / CDC 4225-83 / SGSC4696)).